A 644-amino-acid chain; its full sequence is Probable lysophospholipase 2 (644 aa).

Positions Met1–Gly19 are cleaved as a signal peptide. N-linked (GlcNAc...) asparagine glycans are attached at residues Asn44, Asn96, Asn141, Asn178, Asn221, Asn245, Asn253, Asn281, Asn286, Asn316, Asn319, Asn373, Asn393, Asn449, Asn501, Asn558, Asn579, and Asn596. The PLA2c domain occupies Ser53 to Asp600.

This sequence belongs to the lysophospholipase family.

Its subcellular location is the secreted. It carries out the reaction a 1-acyl-sn-glycero-3-phosphocholine + H2O = sn-glycerol 3-phosphocholine + a fatty acid + H(+). Its function is as follows. Catalyzes the release of fatty acids from lysophospholipids. This chain is Probable lysophospholipase 2 (plb2), found in Schizosaccharomyces pombe (strain 972 / ATCC 24843) (Fission yeast).